We begin with the raw amino-acid sequence, 410 residues long: D-3-phosphoglycerate dehydrogenase (410 aa).

Residues 161-162 (HI), Asp-181, 238-240 (ASR), and Asp-264 contribute to the NAD(+) site. The active site involves Arg-240. Glu-269 is a catalytic residue. His-292 serves as the catalytic Proton donor. 292–295 (HIGG) is an NAD(+) binding site. One can recognise an ACT domain in the interval 339–410 (RLMHIHENRP…PGTIRARLLY (72 aa)).

It belongs to the D-isomer specific 2-hydroxyacid dehydrogenase family. As to quaternary structure, homotetramer.

The catalysed reaction is (2R)-3-phosphoglycerate + NAD(+) = 3-phosphooxypyruvate + NADH + H(+). It carries out the reaction (R)-2-hydroxyglutarate + NAD(+) = 2-oxoglutarate + NADH + H(+). The protein operates within amino-acid biosynthesis; L-serine biosynthesis; L-serine from 3-phospho-D-glycerate: step 1/3. In bacteria displays feedback inhibition by L-serine. Functionally, catalyzes the reversible oxidation of 3-phospho-D-glycerate to 3-phosphonooxypyruvate, the first step of the phosphorylated L-serine biosynthesis pathway. Also catalyzes the reversible oxidation of 2-hydroxyglutarate to 2-oxoglutarate. In Escherichia coli O6:H1 (strain CFT073 / ATCC 700928 / UPEC), this protein is D-3-phosphoglycerate dehydrogenase (serA).